Consider the following 46-residue polypeptide: TGSGPSLSIVNPLDVLRQRLLLEIARRRMRQSQDQIQANREILQTI.

An Isoleucine amide modification is found at Ile-46.

The protein belongs to the sauvagine/corticotropin-releasing factor/urotensin I family.

Its subcellular location is the secreted. Functionally, regulation of fluid secretion. Stimulates primary urine secretion by Malpighian tubules and causes a dose-dependent stimulation of cAMP levels in the tubules. This Periplaneta americana (American cockroach) protein is Diuretic hormone.